The sequence spans 297 residues: Protein LRATD1 (297 aa).

Ser-38 is modified (phosphoserine). In terms of domain architecture, LRAT spans 138–233 (PAPEPPAPAP…CRFGKREFKA (96 aa)).

This sequence belongs to the LRATD family.

It localises to the cytoplasm. May play a role in cell morphology and motility. The sequence is that of Protein LRATD1 (LRATD1) from Bos taurus (Bovine).